The following is a 125-amino-acid chain: Probable mercury resistance operon repressor (125 aa).

The HTH arsR-type domain maps to Val-15–Ala-109. A DNA-binding region (H-T-H motif) is located at residues Ser-49 to Ser-68. 3 residues coordinate Hg(2+): Cys-69, Cys-73, and Cys-114.

Negatively regulates the mercuric reductase merA and the organolyase merB in the absence of mercuric ions. This is Probable mercury resistance operon repressor (merR) from Streptomyces lividans.